The primary structure comprises 668 residues: Probable 6-phosphofructo-2-kinase PB17E12.14c (668 aa).

Positions 1–14 (MSNNNNKDDSELQS) are enriched in basic and acidic residues. Disordered stretches follow at residues 1–105 (MSNN…GSRP) and 136–185 (HRVP…EATN). Composition is skewed to polar residues over residues 46 to 56 (NDHSFTNTDSV), 65 to 86 (SPVSTLTSNSANFSDSSLQNSP), and 164 to 184 (SSMSIPGQTSIVSSNNGSEAT). An ATP-binding site is contributed by 197-204 (GLPARGKS). Catalysis depends on residues aspartate 281 and cysteine 312. A beta-D-fructose 6-phosphate-binding site is contributed by arginine 346. The active site involves glutamate 540. Histidine 608 (proton donor) is an active-site residue.

The catalysed reaction is beta-D-fructose 6-phosphate + ATP = beta-D-fructose 2,6-bisphosphate + ADP + H(+). Functionally, synthesis of fructose 2,6-bisphosphate. This is Probable 6-phosphofructo-2-kinase PB17E12.14c from Schizosaccharomyces pombe (strain 972 / ATCC 24843) (Fission yeast).